The following is a 519-amino-acid chain: Importin subunit alpha-9 (519 aa).

Residues 1-29 (MADDGSASNRRDPIKSSVGNVAGQRRRKQ) form a disordered region. ARM repeat units lie at residues 116–156 (FPPV…NIAA), 158–197 (KPEE…NVAG), 200–239 (EDLR…NLIK), 244–283 (KAAA…YLSA), 286–326 (DIAT…NFVA), 335–374 (ILIR…NIAA), 377–416 (IEHK…NLCV), and 429–468 (QEHL…LVLR).

Belongs to the importin alpha family. In terms of assembly, forms a complex with importin subunit beta-1.

It localises to the nucleus envelope. Functionally, binds to conventional NLS motifs and mediates nuclear protein import across the nuclear envelope. Acts as a cellular receptor for the nuclear import of the virD2 protein of Agrobacterium, but is not essential for Agrobacterium-mediated root transformation. This is Importin subunit alpha-9 from Arabidopsis thaliana (Mouse-ear cress).